A 438-amino-acid chain; its full sequence is Exosome complex component RRP45 (438 aa).

Ser65 bears the Phosphoserine mark. The residue at position 297 (Lys297) is an N6-acetyllysine; alternate. Lys297 is covalently cross-linked (Glycyl lysine isopeptide (Lys-Gly) (interchain with G-Cter in SUMO1); alternate). Lys297 is covalently cross-linked (Glycyl lysine isopeptide (Lys-Gly) (interchain with G-Cter in SUMO2); alternate). Phosphoserine is present on residues Ser306 and Ser346. 2 disordered regions span residues 337 to 365 (AQIGDGIENSWGDLEDSEKEEEEEEGGID) and 377 to 438 (TGEV…RTAN). The span at 349–364 (DLEDSEKEEEEEEGGI) shows a compositional bias: acidic residues. Residues Ser393 and Ser395 each carry the phosphoserine modification. The segment covering 427 to 438 (QGKRKKKKRTAN) has biased composition (basic residues).

Belongs to the RNase PH family. In terms of assembly, component of the RNA exosome core complex (Exo-9), composed of EXOSC1, EXOSC2, EXOSC3, EXOSC4, EXOSC5, EXOSC6, EXOSC7, EXOSC8 and EXOSC9; within the complex interacts with EXOSC3, EXOSC4, EXOSC5 and DIS3. The catalytically inactive RNA exosome core complex (Exo-9) associates with the catalytic subunit EXOSC10/RRP6. Exo-9 may associate with DIS3 to form the nucleolar exosome complex, or DIS3L to form the cytoplasmic exosome complex. Exo-9 is formed by a hexameric base ring consisting of the heterodimers EXOSC4-EXOSC9, EXOSC5-EXOSC8 and EXOSC6-EXOSC7, and a cap ring consisting of EXOSC1, EXOSC2 and EXOSC3. The RNA exosome complex associates with cofactors C1D/RRP47, MPHOSPH6/MPP6 and MTREX/MTR4. Interacts (via C-terminus region) with SETX (via N-terminus domain); the interaction enhances SETX sumoylation. Interacts with DIS3; the interaction is direct.

It is found in the cytoplasm. Its subcellular location is the nucleus. The protein resides in the nucleolus. It localises to the nucleoplasm. Non-catalytic component of the RNA exosome complex which has 3'-&gt;5' exoribonuclease activity and participates in a multitude of cellular RNA processing and degradation events. In the nucleus, the RNA exosome complex is involved in proper maturation of stable RNA species such as rRNA, snRNA and snoRNA, in the elimination of RNA processing by-products and non-coding 'pervasive' transcripts, such as antisense RNA species and promoter-upstream transcripts (PROMPTs), and of mRNAs with processing defects, thereby limiting or excluding their export to the cytoplasm. The RNA exosome may be involved in Ig class switch recombination (CSR) and/or Ig variable region somatic hypermutation (SHM) by targeting AICDA deamination activity to transcribed dsDNA substrates. In the cytoplasm, the RNA exosome complex is involved in general mRNA turnover and specifically degrades inherently unstable mRNAs containing AU-rich elements (AREs) within their 3' untranslated regions, and in RNA surveillance pathways, preventing translation of aberrant mRNAs. It seems to be involved in degradation of histone mRNA. The catalytic inactive RNA exosome core complex of 9 subunits (Exo-9) is proposed to play a pivotal role in the binding and presentation of RNA for ribonucleolysis, and to serve as a scaffold for the association with catalytic subunits and accessory proteins or complexes. EXOSC9 binds to ARE-containing RNAs. The polypeptide is Exosome complex component RRP45 (Exosc9) (Mus musculus (Mouse)).